We begin with the raw amino-acid sequence, 215 residues long: Triosephosphate isomerase (215 aa).

Catalysis depends on His82, which acts as the Electrophile. Glu153 (proton acceptor) is an active-site residue.

Belongs to the triosephosphate isomerase family. In terms of assembly, homodimer.

The catalysed reaction is D-glyceraldehyde 3-phosphate = dihydroxyacetone phosphate. The protein operates within carbohydrate biosynthesis; gluconeogenesis. It functions in the pathway carbohydrate degradation; glycolysis; D-glyceraldehyde 3-phosphate from glycerone phosphate: step 1/1. The chain is Triosephosphate isomerase (Tpi) from Heliothis virescens (Tobacco budworm moth).